The sequence spans 363 residues: tRNA N6-adenosine threonylcarbamoyltransferase (363 aa).

Positions 121 and 125 each coordinate Fe cation. Substrate-binding positions include Leu143–Gly147, Asp176, Gly189, and Asn287. Asp315 provides a ligand contact to Fe cation.

It belongs to the KAE1 / TsaD family. The cofactor is Fe(2+).

It localises to the cytoplasm. The catalysed reaction is L-threonylcarbamoyladenylate + adenosine(37) in tRNA = N(6)-L-threonylcarbamoyladenosine(37) in tRNA + AMP + H(+). Required for the formation of a threonylcarbamoyl group on adenosine at position 37 (t(6)A37) in tRNAs that read codons beginning with adenine. Is involved in the transfer of the threonylcarbamoyl moiety of threonylcarbamoyl-AMP (TC-AMP) to the N6 group of A37, together with TsaE and TsaB. TsaD likely plays a direct catalytic role in this reaction. The protein is tRNA N6-adenosine threonylcarbamoyltransferase of Rhodopseudomonas palustris (strain ATCC BAA-98 / CGA009).